A 327-amino-acid chain; its full sequence is tRNA uridine(34) hydroxylase (327 aa).

The 95-residue stretch at 123-217 (SDPEVLLVDT…YLEEVKLEES (95 aa)) folds into the Rhodanese domain. C177 functions as the Cysteine persulfide intermediate in the catalytic mechanism.

It belongs to the TrhO family.

It catalyses the reaction uridine(34) in tRNA + AH2 + O2 = 5-hydroxyuridine(34) in tRNA + A + H2O. Its function is as follows. Catalyzes oxygen-dependent 5-hydroxyuridine (ho5U) modification at position 34 in tRNAs. The sequence is that of tRNA uridine(34) hydroxylase from Shewanella pealeana (strain ATCC 700345 / ANG-SQ1).